Here is a 195-residue protein sequence, read N- to C-terminus: Ciliary neurotrophic factor (195 aa).

It belongs to the CNTF family. Nervous system.

The protein localises to the cytoplasm. Functionally, CNTF is a survival factor for various neuronal cell types. Seems to prevent the degeneration of motor axons after axotomy. The chain is Ciliary neurotrophic factor (CNTF) from Gallus gallus (Chicken).